A 916-amino-acid chain; its full sequence is Inter-alpha-trypsin inhibitor heavy chain H4 (916 aa).

The signal sequence occupies residues Met-1 to Ala-27. In terms of domain architecture, VIT spans Gln-28–Glu-149. Asn-82 and Asn-208 each carry an N-linked (GlcNAc...) asparagine glycan. The VWFA domain occupies Asn-275–Val-458. Asn-518 is a glycosylation site (N-linked (GlcNAc...) asparagine). Disordered stretches follow at residues Pro-597 to Gly-616 and Pro-678 to Arg-701. The span at Pro-678–Ser-689 shows a compositional bias: low complexity. Ser-683 is a glycosylation site (O-linked (GalNAc...) serine). Residues Thr-705, Thr-706, and Thr-708 are each glycosylated (O-linked (GalNAc...) threonine). A disulfide bridge links Cys-733 with Cys-911.

The protein belongs to the ITIH family. Interacts (via C-terminus) with DNAJC1 (via SANT 2 domain). Post-translationally, appears to be both N- and O-glycosylated.

Its subcellular location is the secreted. Functionally, type II acute-phase protein (APP) involved in inflammatory responses to trauma. May also play a role in liver development or regeneration. This is Inter-alpha-trypsin inhibitor heavy chain H4 (ITIH4) from Bos taurus (Bovine).